A 258-amino-acid chain; its full sequence is Large ribosomal subunit protein eL8z (258 aa).

Positions 1 to 20 are disordered; sequence MAPKRGGRAPVPAKKKTEKV.

It belongs to the eukaryotic ribosomal protein eL8 family.

The chain is Large ribosomal subunit protein eL8z (RPL7A-1) from Oryza sativa subsp. japonica (Rice).